A 113-amino-acid chain; its full sequence is UPF0060 membrane protein Arth_4423 (113 aa).

A run of 4 helical transmembrane segments spans residues 7-27 (VLLF…VWQA), 33-53 (AWWW…VATL), 62-82 (ILAA…MVFD), and 91-111 (VIGS…PRGT).

Belongs to the UPF0060 family.

The protein resides in the cell membrane. This Arthrobacter sp. (strain FB24) protein is UPF0060 membrane protein Arth_4423.